Here is a 338-residue protein sequence, read N- to C-terminus: MNTRPFYFGLIFIAIIAILANYLGNTDFSHHYHISALIIAILLGMAIGNTIYPQFSTQVEKGVLFAKGALLRTGIVLYGFRLTFGDIADVGLNAVVTDAIMLISTFFFTVLLGIRYLKMDKQLVYLTGAGCSICGAAAVMAAESVTKAESHKVSVAIAIVVIFGTLAIFTYPLFYTWSQDLINAHQFGIYVGSSVHEVAQVYAIGENIDPIVANTAVISKMIRVMMLAPFLLMLSWLLTRSDGVSENTSHKITIPWFAVLFIGVAIFNSFDLLPKELVKLFVEIDSFLLISSMAALGLTTHASAIKKAGLKPFVLGILTYLWLVVGGFLVNYGISKLI.

10 helical membrane-spanning segments follow: residues proline 5–leucine 23, histidine 33–phenylalanine 55, glycine 62–phenylalanine 84, alanine 94–tyrosine 116, leucine 123–valine 145, valine 155–tryptophan 177, isoleucine 222–threonine 239, isoleucine 254–leucine 273, leucine 280–alanine 302, and proline 312–isoleucine 334.

It belongs to the UPF0324 family.

It is found in the cell membrane. The sequence is that of UPF0324 membrane protein NMA0465 from Neisseria meningitidis serogroup A / serotype 4A (strain DSM 15465 / Z2491).